A 209-amino-acid polypeptide reads, in one-letter code: Putative 3-methyladenine DNA glycosylase (209 aa).

It belongs to the DNA glycosylase MPG family.

The polypeptide is Putative 3-methyladenine DNA glycosylase (Deinococcus geothermalis (strain DSM 11300 / CIP 105573 / AG-3a)).